A 377-amino-acid polypeptide reads, in one-letter code: MAAAVRFQVVRALPMSRPAISAAATSVFCSSSHRQLHHAVIPHGKGGRSSVSGVVATVFGATGFLGRYVVNHLGRMGSQVIIPYRCDIYDTMHLRLMGDLGQLIFLEWDARDKDSIRKAVQHSNVVINLIGREWETRNFDFEDVFVNIPRAIAQASKEAGVERFIHVSHLNASMKSSAKSLRSKAVGEKEVRTVFPDAIIIRPSDMFGREDRFLNHFANYRWFLAVPLVSLGFKTVKQPVYVADVSKGIANATKNPDAIGKTFAFTGPNRYLLFHLVKYIFGMTHRTFIPYPLPRFVYSWIGRLFGLSPFEPWTTKDKVERIHISDVMATDLPGLEDLGVQPTPLELKSIEVLRRHRTYRWLSSEIEETKPAKTVNY.

The N-terminal 35 residues, 1-35 (MAAAVRFQVVRALPMSRPAISAAATSVFCSSSHRQ), are a transit peptide targeting the mitochondrion. An N6-succinyllysine modification is found at lysine 175. N6-acetyllysine is present on residues lysine 189 and lysine 370.

This sequence belongs to the complex I NDUFA9 subunit family. In terms of assembly, complex I is composed of 45 different subunits. This a component of the hydrophobic protein fraction. Interacts with BLOC1S1. Interacts with SLC2A4. Interacts with CLOCK. Interacts with RAB5IF. Requires FAD as cofactor. In terms of processing, acetylated on lysine residues. BLOC1S1 is required for acetylation. Acetylated by CLOCK in a circadian manner. In terms of tissue distribution, expressed by the principal cells of the epididymis. Detected in flagella of epididymal sperm (at protein level).

Its subcellular location is the mitochondrion matrix. In terms of biological role, accessory subunit of the mitochondrial membrane respiratory chain NADH dehydrogenase (Complex I), that is believed not to be involved in catalysis. Complex I functions in the transfer of electrons from NADH to the respiratory chain. The immediate electron acceptor for the enzyme is believed to be ubiquinone. The polypeptide is NADH dehydrogenase [ubiquinone] 1 alpha subcomplex subunit 9, mitochondrial (Rattus norvegicus (Rat)).